We begin with the raw amino-acid sequence, 446 residues long: Tubulin beta-6 chain (446 aa).

The MREI motif motif lies at 1–4 (MREI). Positions 11, 69, 138, 142, 143, and 144 each coordinate GTP. Glu-69 contributes to the Mg(2+) binding site. Ser-172 carries the phosphoserine; by CDK1 modification. The GTP site is built by Asn-204 and Asn-226. Position 438 is a 5-glutamyl polyglutamate (Glu-438).

Belongs to the tubulin family. Dimer of alpha and beta chains. A typical microtubule is a hollow water-filled tube with an outer diameter of 25 nm and an inner diameter of 15 nM. Alpha-beta heterodimers associate head-to-tail to form protofilaments running lengthwise along the microtubule wall with the beta-tubulin subunit facing the microtubule plus end conferring a structural polarity. Microtubules usually have 13 protofilaments but different protofilament numbers can be found in some organisms and specialized cells. The cofactor is Mg(2+). Post-translationally, some glutamate residues at the C-terminus are polyglycylated, resulting in polyglycine chains on the gamma-carboxyl group. Glycylation is mainly limited to tubulin incorporated into axonemes (cilia and flagella) whereas glutamylation is prevalent in neuronal cells, centrioles, axonemes, and the mitotic spindle. Both modifications can coexist on the same protein on adjacent residues, and lowering polyglycylation levels increases polyglutamylation, and reciprocally. Cilia and flagella glycylation is required for their stability and maintenance. Flagella glycylation controls sperm motility. In terms of processing, some glutamate residues at the C-terminus are polyglutamylated, resulting in polyglutamate chains on the gamma-carboxyl group. Polyglutamylation plays a key role in microtubule severing by spastin (SPAST). SPAST preferentially recognizes and acts on microtubules decorated with short polyglutamate tails: severing activity by SPAST increases as the number of glutamates per tubulin rises from one to eight, but decreases beyond this glutamylation threshold. Glutamylation is also involved in cilia motility. Phosphorylated on Ser-172 by CDK1 during the cell cycle, from metaphase to telophase, but not in interphase. This phosphorylation inhibits tubulin incorporation into microtubules.

It localises to the cytoplasm. The protein resides in the cytoskeleton. Its function is as follows. Tubulin is the major constituent of microtubules, a cylinder consisting of laterally associated linear protofilaments composed of alpha- and beta-tubulin heterodimers. Microtubules grow by the addition of GTP-tubulin dimers to the microtubule end, where a stabilizing cap forms. Below the cap, tubulin dimers are in GDP-bound state, owing to GTPase activity of alpha-tubulin. The polypeptide is Tubulin beta-6 chain (TUBB6) (Bos taurus (Bovine)).